A 398-amino-acid chain; its full sequence is Tyrosine--tRNA ligase (398 aa).

The 'HIGH' region signature appears at 42–51; it reads PTAPDIHLGH. Residues 226-230 carry the 'KMSKS' region motif; it reads KMSKS. ATP is bound at residue K229. One can recognise an S4 RNA-binding domain in the interval 336–397; that stretch reads LAIANLLKDA…GKRKFAKVTL (62 aa).

It belongs to the class-I aminoacyl-tRNA synthetase family. TyrS type 2 subfamily. As to quaternary structure, homodimer.

It localises to the cytoplasm. The catalysed reaction is tRNA(Tyr) + L-tyrosine + ATP = L-tyrosyl-tRNA(Tyr) + AMP + diphosphate + H(+). Its function is as follows. Catalyzes the attachment of tyrosine to tRNA(Tyr) in a two-step reaction: tyrosine is first activated by ATP to form Tyr-AMP and then transferred to the acceptor end of tRNA(Tyr). The sequence is that of Tyrosine--tRNA ligase from Shewanella oneidensis (strain ATCC 700550 / JCM 31522 / CIP 106686 / LMG 19005 / NCIMB 14063 / MR-1).